The sequence spans 523 residues: DNA primase (523 aa).

The CHC2-type zinc-finger motif lies at 37–61; the sequence is CPFHAEKTPSFFVNPLQGYFYCFGC. The 82-residue stretch at 259–340 folds into the Toprim domain; that stretch reads KSVILVEGYI…NVSVVRMDFG (82 aa). E265, D309, and D311 together coordinate Mg(2+).

Belongs to the DnaG primase family. As to quaternary structure, monomer. Interacts with DnaB. It depends on Zn(2+) as a cofactor. Requires Mg(2+) as cofactor.

The enzyme catalyses ssDNA + n NTP = ssDNA/pppN(pN)n-1 hybrid + (n-1) diphosphate.. Its function is as follows. RNA polymerase that catalyzes the synthesis of short RNA molecules used as primers for DNA polymerase during DNA replication. In Borreliella burgdorferi (strain ATCC 35210 / DSM 4680 / CIP 102532 / B31) (Borrelia burgdorferi), this protein is DNA primase.